The primary structure comprises 676 residues: Envelope glycoprotein (676 aa).

The N-terminal stretch at 1–32 is a signal peptide; it reads MGASGILQLPRERFRKTSFFVWVIILFHKVFS. Over 33–650 the chain is Extracellular; it reads IPLGVVHNNT…GSNWWTGWKQ (618 aa). N40 carries N-linked (GlcNAc...) asparagine; by host glycosylation. 5 cysteine pairs are disulfide-bonded: C53–C609, C108–C135, C121–C147, C511–C556, and C601–C608. The segment at 54-201 is receptor-binding; it reads RDKLSSTSQL…DFFQSPPLHE (148 aa). 5 N-linked (GlcNAc...) asparagine; by host glycosylation sites follow: N204, N228, N257, N268, and N296. The tract at residues 305-485 is mucin-like region; sequence ELSFVPVPET…LSGPGFLTNT (181 aa). Positions 356 to 463 are disordered; it reads IKGKDTMPTT…PTTLPEQHTA (108 aa). Residues 361–374 are compositionally biased toward low complexity; it reads TMPTTVTGVPTTTP. The span at 402 to 422 shows a compositional bias: polar residues; sequence TTQPAKTTSQPTNSTESTTLN. N414 is a glycosylation site (N-linked (GlcNAc...) asparagine; by host). Over residues 423–440 the composition is skewed to low complexity; that stretch reads PTSEPSSRGTGPSSPTVP. A glycan (N-linked (GlcNAc...) asparagine; by host) is linked at N441. A compositionally biased stretch (polar residues) spans 452-463; that stretch reads TTPTTLPEQHTA. The segment at 524–539 is fusion peptide; it reads GAAIGLAWIPYFGPAA. A coiled-coil region spans residues 554–595; it reads LICGLRQLANETTQALQLFLRATTELRTFSILNRKAIDFLLQ. N563 carries an N-linked (GlcNAc...) asparagine; by host glycan. Residues 615–634 are a coiled coil; sequence WTKNITDKIDQIIHDFVDNN. An N-linked (GlcNAc...) asparagine; by host glycan is attached at N618. A helical transmembrane segment spans residues 651-671; it reads WVPAGIGITGVIIAIIALLCI. S-palmitoyl cysteine; by host attachment occurs at residues C670 and C672. Over 672 to 676 the chain is Cytoplasmic; sequence CKFML.

Belongs to the filoviruses glycoprotein family. As to quaternary structure, homotrimer; each monomer consists of a GP1 and a GP2 subunit linked by disulfide bonds. The resulting peplomers (GP1,2) protrude from the virus surface as spikes. GP1 and GP2delta are part of GP1,2delta soluble complexes released by ectodomain shedding. GP1,2 interacts with host integrin ITGAV/alpha-V and CLEC10A. Also binds human CD209 and CLEC4M (collectively referred to as DC-SIGN(R)), as well as human FOLR1. Interacts with host entry receptor NPC1. Post-translationally, the signal peptide region modulates GP's high mannose glycosylation, thereby determining the efficiency of the interactions with DC-SIGN(R). In terms of processing, N-glycosylated. O-glycosylated in the mucin-like region. Post-translationally, palmitoylation of GP2 is not required for its function. In terms of processing, specific enzymatic cleavages in vivo yield mature proteins. The precursor is processed into GP1 and GP2 by host cell furin in the trans Golgi, and maybe by other host proteases, to yield the mature GP1 and GP2 proteins. The cleavage site corresponds to the furin optimal cleavage sequence [KR]-X-[KR]-R. This cleavage does not seem to be required for function. After the internalization of the virus into cell endosomes, GP1 C-terminus is removed by the endosomal proteases cathepsin B, cathepsin L, or both, leaving a 19-kDa N-terminal fragment which is further digested by cathepsin B. Proteolytic processing of GP1,2 by host ADAM17 can remove the transmembrane anchor of GP2 and leads to shedding of complexes consisting in GP1 and truncated GP2 (GP1,2delta).

It is found in the virion membrane. Its subcellular location is the host cell membrane. The protein resides in the secreted. In terms of biological role, GP1 is responsible for binding to the receptor(s) on target cells. Interacts with CD209/DC-SIGN and CLEC4M/DC-SIGNR which act as cofactors for virus entry into the host cell. Binding to CD209 and CLEC4M, which are respectively found on dendritic cells (DCs), and on endothelial cells of liver sinusoids and lymph node sinuses, facilitate infection of macrophages and endothelial cells. These interactions not only facilitate virus cell entry, but also allow capture of viral particles by DCs and subsequent transmission to susceptible cells without DCs infection (trans infection). Binding to the macrophage specific lectin CLEC10A also seems to enhance virus infectivity. Interaction with FOLR1/folate receptor alpha may be a cofactor for virus entry in some cell types, although results are contradictory. Members of the Tyro3 receptor tyrosine kinase family also seem to be cell entry factors in filovirus infection. Once attached, the virions are internalized through clathrin-dependent endocytosis and/or macropinocytosis. After internalization of the virus into the endosomes of the host cell, proteolysis of GP1 by two cysteine proteases, CTSB/cathepsin B and CTSL/cathepsin L presumably induces a conformational change of GP2, unmasking its fusion peptide and initiating membranes fusion. Its function is as follows. GP2 acts as a class I viral fusion protein. Under the current model, the protein has at least 3 conformational states: pre-fusion native state, pre-hairpin intermediate state, and post-fusion hairpin state. During viral and target cell membrane fusion, the coiled coil regions (heptad repeats) assume a trimer-of-hairpins structure, positioning the fusion peptide in close proximity to the C-terminal region of the ectodomain. The formation of this structure appears to drive apposition and subsequent fusion of viral and target cell membranes. Responsible for penetration of the virus into the cell cytoplasm by mediating the fusion of the membrane of the endocytosed virus particle with the endosomal membrane. Low pH in endosomes induces an irreversible conformational change in GP2, releasing the fusion hydrophobic peptide. Functionally, GP1,2 which is the disulfid-linked complex of GP1 and GP2, mediates endothelial cell activation and decreases endothelial barrier function. Mediates activation of primary macrophages. At terminal stages of the viral infection, when its expression is high, GP1,2 down-modulates the expression of various host cell surface molecules that are essential for immune surveillance and cell adhesion. Down-modulates integrins ITGA1, ITGA2, ITGA3, ITGA4, ITGA5, ITGA6, ITGAV and ITGB1. GP1,2 alters the cellular recycling of the dimer alpha-V/beta-3 via a dynamin-dependent pathway. Decrease in the host cell surface expression of various adhesion molecules may lead to cell detachment, contributing to the disruption of blood vessel integrity and hemorrhages developed during Ebola virus infection (cytotoxicity). This cytotoxicity appears late in the infection, only after the massive release of viral particles by infected cells. Down-modulation of host MHC-I, leading to altered recognition by immune cells, may explain the immune suppression and inflammatory dysfunction linked to Ebola infection. Also down-modulates EGFR surface expression. Counteracts the antiviral effect of host tetherin. GP2delta is part of the complex GP1,2delta released by host ADAM17 metalloprotease. This secreted complex may play a role in the pathogenesis of the virus by efficiently blocking the neutralizing antibodies that would otherwise neutralize the virus surface glycoproteins GP1,2. Might therefore contribute to the lack of inflammatory reaction seen during infection in spite the of extensive necrosis and massive virus production. GP1,2delta does not seem to be involved in activation of primary macrophages. This is Envelope glycoprotein (GP) from Tai Forest ebolavirus (strain Cote d'Ivoire-94) (TAFV).